A 126-amino-acid chain; its full sequence is Holo-[acyl-carrier-protein] synthase (126 aa).

Mg(2+) is bound by residues Asp-9 and Glu-58.

This sequence belongs to the P-Pant transferase superfamily. AcpS family. Mg(2+) is required as a cofactor.

It localises to the cytoplasm. The catalysed reaction is apo-[ACP] + CoA = holo-[ACP] + adenosine 3',5'-bisphosphate + H(+). Its function is as follows. Transfers the 4'-phosphopantetheine moiety from coenzyme A to a Ser of acyl-carrier-protein. In Escherichia coli O127:H6 (strain E2348/69 / EPEC), this protein is Holo-[acyl-carrier-protein] synthase.